A 349-amino-acid chain; its full sequence is Phosphoribosylformylglycinamidine cyclo-ligase (349 aa).

Belongs to the AIR synthase family.

It localises to the cytoplasm. It carries out the reaction 2-formamido-N(1)-(5-O-phospho-beta-D-ribosyl)acetamidine + ATP = 5-amino-1-(5-phospho-beta-D-ribosyl)imidazole + ADP + phosphate + H(+). The protein operates within purine metabolism; IMP biosynthesis via de novo pathway; 5-amino-1-(5-phospho-D-ribosyl)imidazole from N(2)-formyl-N(1)-(5-phospho-D-ribosyl)glycinamide: step 2/2. The polypeptide is Phosphoribosylformylglycinamidine cyclo-ligase (Jannaschia sp. (strain CCS1)).